The chain runs to 1284 residues: ABC multidrug transporter atrC (1284 aa).

Positions 1 to 11 (MKSTAESKETP) are enriched in basic and acidic residues. The disordered stretch occupies residues 1 to 24 (MKSTAESKETPSQDESTTSVPCTE). 6 helical membrane passes run 55–75 (AVAI…NLIF), 99–119 (AAEL…LSYT), 178–198 (IGLL…RLWC), 203–223 (TLIC…VAAV), 282–302 (LLGL…GLAF), and 320–340 (IFTV…LAPY). The 292-residue stretch at 55–346 (AVAILAACAS…LAPYSIEFSR (292 aa)) folds into the ABC transmembrane type-1 1 domain. The region spanning 381-626 (VELENVTFSY…DGVYAGLVKI (246 aa)) is the ABC transporter 1 domain. N-linked (GlcNAc...) asparagine glycans are attached at residues Asn385 and Asn401. 416–423 (GQSGSGKS) lines the ATP pocket. N-linked (GlcNAc...) asparagine glycosylation is found at Asn488 and Asn632. 2 helical membrane-spanning segments follow: residues 705-725 (LVVL…AILM) and 745-765 (FYAS…LAVG). The 288-residue stretch at 705–992 (LVVLLGCLGG…LFQWSTSITK (288 aa)) folds into the ABC transmembrane type-1 2 domain. N-linked (GlcNAc...) asparagine glycosylation occurs at Asn800. 4 helical membrane-spanning segments follow: residues 824–844 (IALV…AIAF), 846–866 (WKLG…AGMV), 931–951 (MICF…GFWY), and 955–975 (LVSL…SVFF). N-linked (GlcNAc...) asparagine glycosylation occurs at Asn995. One can recognise an ABC transporter 2 domain in the interval 1027 to 1280 (IAMDNVRFSY…GGLYRRMCEA (254 aa)). 1062 to 1069 (GSSGCGKS) contributes to the ATP binding site. A glycan (N-linked (GlcNAc...) asparagine) is linked at Asn1122.

Belongs to the ABC transporter superfamily. ABCB family. Multidrug resistance exporter (TC 3.A.1.201) subfamily.

It localises to the cell membrane. Functionally, pleiotropic ABC efflux transporter involved in the protection of the cells against a wide range of toxic compounds. The polypeptide is ABC multidrug transporter atrC (Emericella nidulans (Aspergillus nidulans)).